Consider the following 2212-residue polypeptide: MARFGDEMPGRYGAGGGGSGPAAGVVVGAAGGRGAGGSRQGGQPGAQRMYKQSMAQRARTMALYNPIPVRQNCLTVNRSLFLFSEDNVVRKYAKKITEWPPFEYMILATIIANCIVLALEQHLPDDDKTPMSERLDDTEPYFIGIFCFEAGIKIVALGFAFHKGSYLRNGWNVMDFVVVLTGILATVGTEFDLRTLRAVRVLRPLKLVSGIPSLQVVLKSIMKAMIPLLQIGLLLFFAILIFAIIGLEFYMGKFHTTCFEEGTDDIQGESPAPCGTEEPARTCPNGTKCQPYWEGPNNGITQFDNILFAVLTVFQCITMEGWTDLLYNSNDASGNTWNWLYFIPLIIIGSFFMLNLVLGVLSGEFAKERERVENRRAFLKLRRQQQIERELNGYMEWISKAEEVILAEDETDVEQRHPFDGALRRATLKKSKTDLLNPEEAEDQLADIASVGSPFARASIKSAKLENSTFFHKKERRMRFYIRRMVKTQAFYWTVLSLVALNTLWLAIVHYNQPEWLSDFLYYAEFIFLGLFMSEMFIKMYGLGTRPYFHSSFNCFDCGVIIGSIFEVIWAVIKPGTSFGISVLRALRLLRIFKVTKYWASLRNLVVSLLNSMKSIISLLFLLFLFIVVFALLGMQLFGGQFNFDEGTPPTNFDTFPAAIMTVFQILTGEDWNEVMYDEIKSQGGVQGGMVFSIYFIVLTLFGNYTLLNVFLAIAVDNLANAQELTKDEQEEEEAANQKLALQKAKEVAEVSPLSAANMSIAVKEQQKNQKPAKSVWEQRTSEMRKQNLLASREALYGDAAERWPTTYARPLRPDVKTHLDRPLVVDPQENRNNNTNKSRAPEALRQTARPRESARDPDARRAWPSSPERAPGREGPYGRESEPQQREHAPPREHVPWDADPERAKAGDAPRRHTHRPVAEGEPRRHRARRRPGDEPDDRPERRPRPRDATRPARAADGEGDDGERKRRHRHGPPAHDDRERRHRRRKESQGSGVPMSGPNLSTTRPIQQDLGRQDLPLAEDLDNMKNNKLATGEPASPHDSLGHSGLPPSPAKIGNSTNPGPALATNPQNAASRRTPNNPGNPSNPGPPKTPENSLIVTNPSSTQPNSAKTARKPEHMAVEIPPACPPLNHTVVQVNKNANPDPLPKKEEEKKEEEEADPGEDGPKPMPPYSSMFILSTTNPLRRLCHYILNLRYFEMCILMVIAMSSIALAAEDPVQPNAPRNNVLRYFDYVFTGVFTFEMVIKMIDLGLVLHQGAYFRDLWNILDFIVVSGALVAFAFTGNSKGKDINTIKSLRVLRVLRPLKTIKRLPKLKAVFDCVVNSLKNVFNILIVYMLFMFIFAVVAVQLFKGKFFHCTDESKEFERDCRGKYLLYEKNEVKARDREWKKYDFHYDNVLWALLTLFTVSTGEGWPQVLKHSVDATFENQGPSPGYRMEMSIFYVVYFVVFPFFFVNIFVALIIITFQEQGDKMMEEYSLEKNERACIDFAISAKPLTRHMPQNKQSFQYRMWQFVVSPPFEYTIMAMIALNTIVLMMKFYGASVAYENALRVFNIVFTSLFSLECVLKVMAFGILNYFRDAWNIFDFVTVLGSITDILVTEFGNNFINLSFLRLFRAARLIKLLRQGYTIRILLWTFVQSFKALPYVCLLIAMLFFIYAIIGMQVFGNIGIDGEDEDSDEDEFQITEHNNFRTFFQALMLLFRSATGEAWHNIMLSCLSGKPCDKNSGIQKPECGNEFAYFYFVSFIFLCSFLMLNLFVAVIMDNFEYLTRDSSILGPHHLDEYVRVWAEYDPAACGRIHYKDMYSLLRVISPPLGLGKKCPHRVACKRLLRMDLPVADDNTVHFNSTLMALIRTALDIKIAKGGADKQQMDAELRKEMMAIWPNLSQKTLDLLVTPHKSTDLTVGKIYAAMMIMEYYRQSKAKKLQAMREEQNRTPLMFQRMEPPSPTQEGGPSQNALPSTQLDPGGGLMAQESSMKESPSWVTQRAQEMFQKTGTWSPERGPPIDMPNSQPNSQSVEMREMGTDGYSDSEHYLPMEGQTRAASMPRLPAENQRRRGRPRGNNLSTISDTSPMKRSASVLGPKARRLDDYSLERVPPEENQRYHQRRRDRGHRTSERSLGRYTDVDTGLGTDLSMTTQSGDLPSKDRDQDRGRPKDRKHRPHHHHHHHHHHPPAPDRERYAQERPDTGRARAREQRWSRSPSEGREHATHRQ.

At 1–100 (MARFGDEMPG…KYAKKITEWP (100 aa)) the chain is on the cytoplasmic side. Residues 87–365 (NVVRKYAKKI…LVLGVLSGEF (279 aa)) form an I repeat. The chain crosses the membrane as a helical span at residues 101 to 119 (PFEYMILATIIANCIVLAL). Topologically, residues 120 to 138 (EQHLPDDDKTPMSERLDDT) are extracellular. Residues 139–156 (EPYFIGIFCFEAGIKIVA) form a helical membrane-spanning segment. Residues 157–168 (LGFAFHKGSYLR) are Cytoplasmic-facing. The helical transmembrane segment at 169-184 (NGWNVMDFVVVLTGIL) threads the bilayer. Over 185-192 (ATVGTEFD) the chain is Extracellular. A helical transmembrane segment spans residues 193-211 (LRTLRAVRVLRPLKLVSGI). At 212-230 (PSLQVVLKSIMKAMIPLLQ) the chain is on the cytoplasmic side. Residues 231–250 (IGLLLFFAILIFAIIGLEFY) traverse the membrane as a helical segment. Over 251–337 (MGKFHTTCFE…NSNDASGNTW (87 aa)) the chain is Extracellular. Residue N285 is glycosylated (N-linked (GlcNAc...) asparagine). E320 contributes to the Ca(2+) binding site. The chain crosses the membrane as a helical span at residues 338 to 362 (NWLYFIPLIIIGSFFMLNLVLGVLS). Residues 363–489 (GEFAKERERV…FYIRRMVKTQ (127 aa)) are Cytoplasmic-facing. The segment at 385–402 (QQIERELNGYMEWISKAE) is binding to the beta subunit. At T411 the chain carries Phosphothreonine. Phosphoserine is present on residues S450 and S453. The stretch at 475-719 (ERRMRFYIRR…VFLAIAVDNL (245 aa)) is one II repeat. The chain crosses the membrane as a helical span at residues 490–509 (AFYWTVLSLVALNTLWLAIV). The Extracellular segment spans residues 510–523 (HYNQPEWLSDFLYY). The chain crosses the membrane as a helical span at residues 524–543 (AEFIFLGLFMSEMFIKMYGL). Residues 544–551 (GTRPYFHS) are Cytoplasmic-facing. The helical transmembrane segment at 552-570 (SFNCFDCGVIIGSIFEVIW) threads the bilayer. At 571-580 (AVIKPGTSFG) the chain is on the extracellular side. Residues 581-599 (ISVLRALRLLRIFKVTKYW) traverse the membrane as a helical segment. Residues 600–618 (ASLRNLVVSLLNSMKSIIS) lie on the Cytoplasmic side of the membrane. A helical transmembrane segment spans residues 619–638 (LLFLLFLFIVVFALLGMQLF). The Extracellular portion of the chain corresponds to 639–691 (GGQFNFDEGTPPTNFDTFPAAIMTVFQILTGEDWNEVMYDEIKSQGGVQGGMV). E670 lines the Ca(2+) pocket. Residues 692–716 (FSIYFIVLTLFGNYTLLNVFLAIAV) traverse the membrane as a helical segment. The Cytoplasmic portion of the chain corresponds to 717 to 1190 (DNLANAQELT…TNPLRRLCHY (474 aa)). 3 positions are modified to phosphoserine: S752, S755, and S792. Composition is skewed to basic and acidic residues over residues 814-824 (PDVKTHLDRPL), 850-862 (RPRE…DARR), 871-924 (APGR…EGEP), and 932-958 (RPGD…RAAD). Disordered stretches follow at residues 814–1117 (PDVK…RKPE) and 1137–1170 (VNKN…KPMP). S1038, S1042, and S1051 each carry phosphoserine. A compositionally biased stretch (polar residues) spans 1056 to 1073 (GNSTNPGPALATNPQNAA). The segment covering 1074 to 1083 (SRRTPNNPGN) has biased composition (low complexity). The span at 1094–1111 (ENSLIVTNPSSTQPNSAK) shows a compositional bias: polar residues. Residues 1153 to 1163 (KKEEEEADPGE) are compositionally biased toward acidic residues. Residues 1182–1465 (NPLRRLCHYI…IFVALIIITF (284 aa)) form an III repeat. A helical transmembrane segment spans residues 1191–1214 (ILNLRYFEMCILMVIAMSSIALAA). Topologically, residues 1215-1231 (EDPVQPNAPRNNVLRYF) are extracellular. A helical membrane pass occupies residues 1232–1251 (DYVFTGVFTFEMVIKMIDLG). The Cytoplasmic portion of the chain corresponds to 1252–1258 (LVLHQGA). The chain crosses the membrane as a helical span at residues 1259–1282 (YFRDLWNILDFIVVSGALVAFAFT). The Extracellular portion of the chain corresponds to 1283 to 1293 (GNSKGKDINTI). The chain crosses the membrane as a helical span at residues 1294 to 1311 (KSLRVLRVLRPLKTIKRL). Over 1312 to 1330 (PKLKAVFDCVVNSLKNVFN) the chain is Cytoplasmic. Residues 1331 to 1350 (ILIVYMLFMFIFAVVAVQLF) form a helical membrane-spanning segment. At 1351–1437 (KGKFFHCTDE…QGPSPGYRME (87 aa)) the chain is on the extracellular side. E1411 provides a ligand contact to Ca(2+). Residues 1438–1462 (MSIFYVVYFVVFPFFFVNIFVALII) traverse the membrane as a helical segment. Over 1463 to 1518 (ITFQEQGDKMMEEYSLEKNERACIDFAISAKPLTRHMPQNKQSFQYRMWQFVVSPP) the chain is Cytoplasmic. An IV repeat occupies 1502 to 1765 (NKQSFQYRMW…LFVAVIMDNF (264 aa)). The helical transmembrane segment at 1519–1537 (FEYTIMAMIALNTIVLMMK) threads the bilayer. Residues 1538 to 1551 (FYGASVAYENALRV) lie on the Extracellular side of the membrane. The chain crosses the membrane as a helical span at residues 1552 to 1573 (FNIVFTSLFSLECVLKVMAFGI). At 1574 to 1580 (LNYFRDA) the chain is on the cytoplasmic side. The helical transmembrane segment at 1581-1600 (WNIFDFVTVLGSITDILVTE) threads the bilayer. At 1601–1607 (FGNNFIN) the chain is on the extracellular side. N1607 is a glycosylation site (N-linked (GlcNAc...) asparagine). A helical membrane pass occupies residues 1608 to 1626 (LSFLRLFRAARLIKLLRQG). The Cytoplasmic segment spans residues 1627–1645 (YTIRILLWTFVQSFKALPY). Residues 1646-1665 (VCLLIAMLFFIYAIIGMQVF) traverse the membrane as a helical segment. The Extracellular segment spans residues 1666–1737 (GNIGIDGEDE…IQKPECGNEF (72 aa)). Residues 1738–1763 (AYFYFVSFIFLCSFLMLNLFVAVIMD) form a helical membrane-spanning segment. The Cytoplasmic portion of the chain corresponds to 1764–2212 (NFEYLTRDSS…EGREHATHRQ (449 aa)). Position 1935 is a phosphothreonine (T1935). A disordered region spans residues 1940–2212 (QRMEPPSPTQ…EGREHATHRQ (273 aa)). 2 stretches are compositionally biased toward polar residues: residues 1948-1963 (TQEG…STQL) and 1972-1997 (QESS…TGTW). Phosphoserine is present on residues S1998, S2016, S2028, S2030, S2071, and S2091. Residues 2008 to 2017 (PNSQPNSQSV) are compositionally biased toward polar residues. The segment covering 2018–2034 (EMREMGTDGYSDSEHYL) has biased composition (basic and acidic residues). A compositionally biased stretch (polar residues) spans 2064–2073 (LSTISDTSPM). 2 stretches are compositionally biased toward basic and acidic residues: residues 2085–2102 (RRLD…ENQR) and 2143–2153 (PSKDRDQDRGR). Residues 2154 to 2172 (PKDRKHRPHHHHHHHHHHP) show a composition bias toward basic residues. A compositionally biased stretch (basic and acidic residues) spans 2173 to 2212 (PAPDRERYAQERPDTGRARAREQRWSRSPSEGREHATHRQ).

Belongs to the calcium channel alpha-1 subunit (TC 1.A.1.11) family. CACNA1A subfamily. In terms of assembly, voltage-dependent calcium channels are multisubunit complexes, consisting of alpha-1, alpha-2, beta and delta subunits in a 1:1:1:1 ratio. The channel activity is directed by the pore-forming and voltage-sensitive alpha-1 subunit. In many cases, this subunit is sufficient to generate voltage-sensitive calcium channel activity. The auxiliary subunits beta and alpha-2/delta linked by a disulfide bridge regulate the channel activity. Interacts (via C-terminal CDB motif) with CABP1 in the pre- and postsynaptic membranes. Interacts with the spider omega-agatoxin-IVA (AC P30288). Interacts with TSPOAP1. Brain specific. Purkinje cells contain predominantly P-type VSCC, the Q-type being a prominent calcium current in cerebellar granule cells. Also found in heart, in kidney distal convoluted tubule (DCT), and in pituitary.

Its subcellular location is the cell membrane. The enzyme catalyses Ca(2+)(in) = Ca(2+)(out). Its function is as follows. Voltage-sensitive calcium channels (VSCC) mediate the entry of calcium ions into excitable cells and are also involved in a variety of calcium-dependent processes, including muscle contraction, hormone or neurotransmitter release, gene expression, cell motility, cell division and cell death. The isoform alpha-1A gives rise to P and/or Q-type calcium currents. P/Q-type calcium channels belong to the 'high-voltage activated' (HVA) group and are specifically blocked by the spider omega-agatoxin-IVA (AC P30288). They are however insensitive to dihydropyridines (DHP). The sequence is that of Voltage-dependent P/Q-type calcium channel subunit alpha-1A from Rattus norvegicus (Rat).